The sequence spans 84 residues: Succinate dehydrogenase membrane anchor subunit (84 aa).

The Mitochondrial matrix portion of the chain corresponds to 1-3 (MIT). The helical transmembrane segment at 4–24 (FQWLIVRVVALFISLTILIDI) threads the bilayer. Over 25–31 (EMFVVML) the chain is Mitochondrial intermembrane. The chain crosses the membrane as a helical span at residues 32-52 (SFLIIHISIGLKAIIHDYIHF). H37 serves as a coordination point for heme. Y49 provides a ligand contact to a ubiquinone. The Mitochondrial matrix segment spans residues 53–58 (QKIKLM). A helical membrane pass occupies residues 59–81 (LLILLRVSAIEISRSFRTFYIII). The Mitochondrial intermembrane portion of the chain corresponds to 82 to 84 (KNT).

As to quaternary structure, part of an enzyme complex containing four subunits: a flavoprotein, an iron-sulfur protein, plus two membrane-anchoring proteins. Heme serves as cofactor.

It localises to the mitochondrion inner membrane. It participates in carbohydrate metabolism; tricarboxylic acid cycle. Its function is as follows. Membrane-anchoring subunit of succinate dehydrogenase (SDH). The chain is Succinate dehydrogenase membrane anchor subunit (SDH4) from Chondrus crispus (Carrageen Irish moss).